The chain runs to 424 residues: Serine--tRNA ligase (424 aa).

Thr231–Glu233 is a binding site for L-serine. Residue Arg262 to Glu264 participates in ATP binding. Glu285 provides a ligand contact to L-serine. Glu349 to Ser352 lines the ATP pocket. Residue Ser385 participates in L-serine binding.

The protein belongs to the class-II aminoacyl-tRNA synthetase family. Type-1 seryl-tRNA synthetase subfamily. As to quaternary structure, homodimer. The tRNA molecule binds across the dimer.

It localises to the cytoplasm. It catalyses the reaction tRNA(Ser) + L-serine + ATP = L-seryl-tRNA(Ser) + AMP + diphosphate + H(+). It carries out the reaction tRNA(Sec) + L-serine + ATP = L-seryl-tRNA(Sec) + AMP + diphosphate + H(+). The protein operates within aminoacyl-tRNA biosynthesis; selenocysteinyl-tRNA(Sec) biosynthesis; L-seryl-tRNA(Sec) from L-serine and tRNA(Sec): step 1/1. In terms of biological role, catalyzes the attachment of serine to tRNA(Ser). Is also able to aminoacylate tRNA(Sec) with serine, to form the misacylated tRNA L-seryl-tRNA(Sec), which will be further converted into selenocysteinyl-tRNA(Sec). This chain is Serine--tRNA ligase, found in Geobacillus kaustophilus (strain HTA426).